The primary structure comprises 276 residues: 4-hydroxy-3-methylbut-2-enyl diphosphate reductase (276 aa).

Cys-12 lines the [4Fe-4S] cluster pocket. The (2E)-4-hydroxy-3-methylbut-2-enyl diphosphate site is built by His-36 and His-70. His-36 and His-70 together coordinate dimethylallyl diphosphate. Isopentenyl diphosphate is bound by residues His-36 and His-70. Cys-92 is a [4Fe-4S] cluster binding site. His-120 is a binding site for (2E)-4-hydroxy-3-methylbut-2-enyl diphosphate. Residue His-120 participates in dimethylallyl diphosphate binding. His-120 contributes to the isopentenyl diphosphate binding site. Catalysis depends on Glu-122, which acts as the Proton donor. Thr-158 lines the (2E)-4-hydroxy-3-methylbut-2-enyl diphosphate pocket. Cys-186 provides a ligand contact to [4Fe-4S] cluster. Residues Ser-214, Ser-215, Asn-216, and Ser-258 each coordinate (2E)-4-hydroxy-3-methylbut-2-enyl diphosphate. Positions 214, 215, 216, and 258 each coordinate dimethylallyl diphosphate. Residues Ser-214, Ser-215, Asn-216, and Ser-258 each coordinate isopentenyl diphosphate.

It belongs to the IspH family. It depends on [4Fe-4S] cluster as a cofactor.

The enzyme catalyses isopentenyl diphosphate + 2 oxidized [2Fe-2S]-[ferredoxin] + H2O = (2E)-4-hydroxy-3-methylbut-2-enyl diphosphate + 2 reduced [2Fe-2S]-[ferredoxin] + 2 H(+). It carries out the reaction dimethylallyl diphosphate + 2 oxidized [2Fe-2S]-[ferredoxin] + H2O = (2E)-4-hydroxy-3-methylbut-2-enyl diphosphate + 2 reduced [2Fe-2S]-[ferredoxin] + 2 H(+). It participates in isoprenoid biosynthesis; dimethylallyl diphosphate biosynthesis; dimethylallyl diphosphate from (2E)-4-hydroxy-3-methylbutenyl diphosphate: step 1/1. The protein operates within isoprenoid biosynthesis; isopentenyl diphosphate biosynthesis via DXP pathway; isopentenyl diphosphate from 1-deoxy-D-xylulose 5-phosphate: step 6/6. Its function is as follows. Catalyzes the conversion of 1-hydroxy-2-methyl-2-(E)-butenyl 4-diphosphate (HMBPP) into a mixture of isopentenyl diphosphate (IPP) and dimethylallyl diphosphate (DMAPP). Acts in the terminal step of the DOXP/MEP pathway for isoprenoid precursor biosynthesis. This Wolinella succinogenes (strain ATCC 29543 / DSM 1740 / CCUG 13145 / JCM 31913 / LMG 7466 / NCTC 11488 / FDC 602W) (Vibrio succinogenes) protein is 4-hydroxy-3-methylbut-2-enyl diphosphate reductase.